We begin with the raw amino-acid sequence, 439 residues long: Dolichyl-diphosphooligosaccharide--protein glycosyltransferase 48 kDa subunit (439 aa).

The signal sequence occupies residues 1-26 (MATRAARVWSGWWLLLLPLLGLAGAS). Over 27 to 409 (GPRTLVLLDN…QYERFIPSAY (383 aa)) the chain is Lumenal. The helical transmembrane segment at 410–430 (PYYASAFSMMLGLFIFSVVFL) threads the bilayer. Topologically, residues 431-439 (HMKEKEKSD) are cytoplasmic.

It belongs to the DDOST 48 kDa subunit family. In terms of assembly, component of the oligosaccharyltransferase (OST) complex. OST exists in two different complex forms which contain common core subunits RPN1, RPN2, OST48, OST4, DAD1 and TMEM258, either STT3A or STT3B as catalytic subunits, and form-specific accessory subunits. STT3A complex assembly occurs through the formation of 3 subcomplexes. Subcomplex 1 contains RPN1 and TMEM258, subcomplex 2 contains the STT3A-specific subunits STT3A, DC2/OSTC, and KCP2 as well as the core subunit OST4, and subcomplex 3 contains RPN2, DAD1, and OST48. The STT3A complex can form stable complexes with the Sec61 complex or with both the Sec61 and TRAP complexes. Interacts with SMIM22.

Its subcellular location is the endoplasmic reticulum membrane. Its pathway is protein modification; protein glycosylation. Subunit of the oligosaccharyl transferase (OST) complex that catalyzes the initial transfer of a defined glycan (Glc(3)Man(9)GlcNAc(2) in eukaryotes) from the lipid carrier dolichol-pyrophosphate to an asparagine residue within an Asn-X-Ser/Thr consensus motif in nascent polypeptide chains, the first step in protein N-glycosylation. N-glycosylation occurs cotranslationally and the complex associates with the Sec61 complex at the channel-forming translocon complex that mediates protein translocation across the endoplasmic reticulum (ER). All subunits are required for a maximal enzyme activity. Required for the assembly of both SST3A- and SS3B-containing OST complexes. The protein is Dolichyl-diphosphooligosaccharide--protein glycosyltransferase 48 kDa subunit of Bos taurus (Bovine).